A 911-amino-acid chain; its full sequence is Nitrate reductase [NADH], clone PBNBR1412 (911 aa).

A disordered region spans residues 53–72 (NDAVDDSYDSSDDEDESHNR). Residues 56-68 (VDDSYDSSDDEDE) are compositionally biased toward acidic residues. Cysteine 191 serves as a coordination point for Mo-molybdopterin. Residues 539-614 (AKMYSMSEVR…LEDYRIGELI (76 aa)) form the Cytochrome b5 heme-binding domain. Residues histidine 574 and histidine 597 each coordinate heme. One can recognise an FAD-binding FR-type domain in the interval 654–766 (REKVPVTLIE…KGPLGHIEYL (113 aa)). FAD contacts are provided by residues 706 to 709 (RAYT), 723 to 727 (VVKVY), phenylalanine 728, phenylalanine 735, 740 to 742 (LMS), and threonine 793.

This sequence belongs to the nitrate reductase family. In terms of assembly, homodimer. Requires FAD as cofactor. Heme serves as cofactor. The cofactor is Mo-molybdopterin.

It catalyses the reaction nitrite + NAD(+) + H2O = nitrate + NADH + H(+). Its function is as follows. Nitrate reductase is a key enzyme involved in the first step of nitrate assimilation in plants, fungi and bacteria. The chain is Nitrate reductase [NADH], clone PBNBR1412 (NIA2) from Brassica napus (Rape).